The sequence spans 149 residues: Ribosome-binding factor A (149 aa).

A disordered region spans residues 123–149; that stretch reads LAKLREGAAPAGDADPYKTSSKSESEE.

The protein belongs to the RbfA family. Monomer. Binds 30S ribosomal subunits, but not 50S ribosomal subunits or 70S ribosomes.

The protein localises to the cytoplasm. Its function is as follows. One of several proteins that assist in the late maturation steps of the functional core of the 30S ribosomal subunit. Associates with free 30S ribosomal subunits (but not with 30S subunits that are part of 70S ribosomes or polysomes). Required for efficient processing of 16S rRNA. May interact with the 5'-terminal helix region of 16S rRNA. The chain is Ribosome-binding factor A from Corynebacterium glutamicum (strain ATCC 13032 / DSM 20300 / JCM 1318 / BCRC 11384 / CCUG 27702 / LMG 3730 / NBRC 12168 / NCIMB 10025 / NRRL B-2784 / 534).